The chain runs to 255 residues: 14-3-3 protein epsilon (255 aa).

N-acetylmethionine is present on methionine 1. Lysine 50 bears the N6-acetyllysine; alternate mark. A Glycyl lysine isopeptide (Lys-Gly) (interchain with G-Cter in SUMO2); alternate cross-link involves residue lysine 50. At serine 65 the chain carries Phosphoserine. Residues lysine 69, lysine 118, and lysine 123 each carry the N6-acetyllysine modification. Residue tyrosine 131 is modified to Phosphotyrosine. Position 137 is a phosphothreonine (threonine 137). Serine 210 carries the phosphoserine modification. At threonine 232 the chain carries Phosphothreonine. Residues 234–255 (DMQGDGEEQNKEALQDVEDENQ) are disordered.

It belongs to the 14-3-3 family. In terms of assembly, homodimer. Heterodimerizes with YWHAZ. Interacts with PKA-phosphorylated AANAT. Interacts with ABL1 (phosphorylated form); the interaction retains it in the cytoplasm. Interacts with ARHGEF28. Interacts with BEX3. Weakly interacts with CDKN1B. Interacts with the 'Thr-369' phosphorylated form of DAPK2. Interacts with DENND1A. Interacts with GAB2. Interacts with phosphorylated GRB10. Interacts with KSR1. Interacts with NDEL1. Interacts with PI4KB, TBC1D22A and TBC1D22B. Interacts with the phosphorylated (by AKT1) form of SRPK2. Interacts with TIAM2. Interacts with the 'Ser-1134' and 'Ser-1161' phosphorylated form of SOS1. Interacts with ZFP36 (via phosphorylated form). Interacts with SLITRK1. Interacts with HSF1 (via phosphorylated form); this interaction promotes HSF1 sequestration in the cytoplasm in a ERK-dependent manner. Interacts with RIPOR2. Interacts with KLHL22; required for the nuclear localization of KLHL22 upon amino acid starvation. Interacts with CRTC1. Interacts with CRTC2 (probably when phosphorylated at 'Ser-171'). Interacts with CRTC3 (probably when phosphorylated at 'Ser-162' and/or 'Ser-273'). Interacts with ATP2B1 and ATP2B3; this interaction inhibits calcium-transporting ATPase activity. Interacts with MEFV. Interacts with RNF115. Interacts with GPR15; this interaction promotes ER-to-Golgi transport of GPR15.

The protein localises to the nucleus. It localises to the cytoplasm. The protein resides in the melanosome. In terms of biological role, adapter protein implicated in the regulation of a large spectrum of both general and specialized signaling pathways. Binds to a large number of partners, usually by recognition of a phosphoserine or phosphothreonine motif. Binding generally results in the modulation of the activity of the binding partner. Positively regulates phosphorylated protein HSF1 nuclear export to the cytoplasm. This Rattus norvegicus (Rat) protein is 14-3-3 protein epsilon (Ywhae).